Here is a 328-residue protein sequence, read N- to C-terminus: Endo-beta-1,4-glucanase B (328 aa).

The N-terminal stretch at 1-17 (MKVNTLLVAVAAGTAMA) is a signal peptide. Asparagine 95 carries an N-linked (GlcNAc...) asparagine glycan. Glutamate 155 acts as the Proton donor in catalysis. Residue glutamate 262 is the Nucleophile of the active site.

This sequence belongs to the glycosyl hydrolase 5 (cellulase A) family.

The protein resides in the secreted. The catalysed reaction is Endohydrolysis of (1-&gt;4)-beta-D-glucosidic linkages in cellulose, lichenin and cereal beta-D-glucans.. Has endoglucanase activity on substrates containing beta-1,4 glycosidic bonds, like in carboxymethylcellulose (CMC), hydroxyethylcellulose (HEC) and beta-glucan. Involved in the degradation of complex natural cellulosic substrates. This is Endo-beta-1,4-glucanase B (eglB) from Emericella nidulans (strain FGSC A4 / ATCC 38163 / CBS 112.46 / NRRL 194 / M139) (Aspergillus nidulans).